The primary structure comprises 181 residues: Putative poly [ADP-ribose] polymerase-like 100L (181 aa).

Residues 1–181 (MDNLKEEETN…KIKYIIHITK (181 aa)) enclose the PARP catalytic domain.

It carries out the reaction NAD(+) + (ADP-D-ribosyl)n-acceptor = nicotinamide + (ADP-D-ribosyl)n+1-acceptor + H(+).. In Invertebrate iridescent virus 6 (IIV-6), this protein is Putative poly [ADP-ribose] polymerase-like 100L.